Here is a 262-residue protein sequence, read N- to C-terminus: Leucine-rich repeat-containing protein 18 (262 aa).

LRR repeat units lie at residues 28 to 49 (GRKR…ILRL), 51 to 72 (DIDE…IAKF), 74 to 95 (NLRW…IGQM), 97 to 118 (SLLF…VELN), 122 to 144 (NIRT…GALK), 145 to 167 (ELHE…AKLP), and 168 to 189 (KLKK…EMFV).

As to expression, exclusively expressed in spermatocytes and roud spermatids within seminiferous tubules during spermatogenesis.

It localises to the cytoplasm. Its function is as follows. May be involved in the regulation of spermatogenesis and sperm maturation. The sequence is that of Leucine-rich repeat-containing protein 18 (Lrrc18) from Mus musculus (Mouse).